A 37-amino-acid chain; its full sequence is Protease 2 large chain (37 aa).

Over residues 1 to 14 (NDGNGRDSDPHDPG) the composition is skewed to basic and acidic residues. The interval 1–37 (NDGNGRDSDPHDPGDWTTAGQCGLWQPARNSQHWTLV) is disordered. Residues 28 to 37 (ARNSQHWTLV) are compositionally biased toward polar residues.

It belongs to the peptidase S8 family. As to quaternary structure, heterodimer of a large and a small chain.

The protein resides in the secreted. This Achromobacter lyticus protein is Protease 2 large chain.